We begin with the raw amino-acid sequence, 367 residues long: Peptide chain release factor 2 (367 aa).

Gln249 bears the N5-methylglutamine mark.

The protein belongs to the prokaryotic/mitochondrial release factor family. In terms of processing, methylated by PrmC. Methylation increases the termination efficiency of RF2.

It is found in the cytoplasm. In terms of biological role, peptide chain release factor 2 directs the termination of translation in response to the peptide chain termination codons UGA and UAA. In Thermotoga sp. (strain RQ2), this protein is Peptide chain release factor 2.